Consider the following 1161-residue polypeptide: MKSVLHQIGKTSLAAALSGAVLLSAQTTHAAALSVSQQPLMLIQGVAPNMLVTLDDSGSMAFAYAPDSISGYGNYTFFASNSFNPMYFDPNTQYKLPKKLTLVNGQVQIQDYPAPNFSSAWRNGFTRSGSINLSNSYKVTIEYGRGYDKESTIKADAAYYYDFTGSSSCNRTNQACYTRRYVSTEQRQNFANWYSFYRTRALATQTAANLAFYSLPENARVSWQLLNDSNCNQMGSGSSSGNCFSNYLRDFTGQHRVNFFNWLEKLSVNGGTPLRQAMTRAGEFLKKTGVNGPYAYRPGTQTAPEYSCRGSYHILMTDGLWNNDSANVGNADSTARNLPDGKSYSSQTPYRDGTFDTLADQAFHYWATDARPDIDDNIKPYIPYPDQANPSAEYWNPRNDPATWQHMVTYTLGLGLTTSLTSPRWEGSTFSGGYNDIVAGNLSWPRASNNDSNNVYDLWHAAVNSRGEFFSADSPDQLVAAFQDILNRISGKDLPASRPAISSSLQEDDTGDKLTRFAYQTSFASDKNWAGDLTRYSLTTQDKATVQTKLWSAQSILDAMPNGGAGRKIMMAGSGTSGLKEFTWGSLSADQQRQLNRDPDRNDVADTKGQDRVAFLRGDRRKENSDNFRTRNSILGDIINSSPATVGKAQYLTYLAQPIEPSGNYSTFAEAQKTRAPRVYVGANDGMLHGFDTDGNETFAFIPSAVFEKLHKLTARGYQGGAHQFYVDGSPVVADAFFGGAWHTVLIGSLRAGGKGLFALDVTDPANIKLLWEIGVDQEPDLGYSFPKPTVARLHNGKWAVVTGNGYSSLNDKAALLIIDLETGAITRKLEVTGRTGVPNGLSSPRLADNNSDGVADYAYAGDLQGNLWRFDLIAGKVNQDDPFSRANDGPAVASSFRVSFGGQPLYSAVDSAGAAQAITAAPSLVRHPTRKGYIVIFGTGKYFENADARADTSRAQTLYGIWDQQTKGEAAGSTPRLTRGNLQQQTLDLQADSTFASTARTIRIASQNPVNWLNNDGSTKQSGWYLDFMVNGTLKGEMLIEDMIAIGQVVLLQTITPNDDPCADGASNWTYGLDPYTGGRTSFTVFDLARQGVVDSKSDYSYNKQNVAVSGTEQKGLGGLTLSTNEQGNPEVCSSGECLTVNPGPNTRGRQNWRPIEGKN.

An N-terminal signal peptide occupies residues 1–30 (MKSVLHQIGKTSLAAALSGAVLLSAQTTHA). Ca(2+) is bound by residues aspartate 598, aspartate 600, asparagine 602, and aspartate 606. Positions 617-619 (RGD) are integrin-binding motif RGD. Ca(2+) contacts are provided by aspartate 849, asparagine 851, aspartate 853, valine 855, and aspartate 857. The interval 1136–1161 (SGECLTVNPGPNTRGRQNWRPIEGKN) is disordered.

This sequence belongs to the PilY1 family. In terms of assembly, interacts (via C-terminus) with host integrins alpha-V/beta-3 (ITGAV/ITGB3) and alpha-V/beta-5 (ITGAV/ITGB5).

The protein localises to the fimbrium. It localises to the membrane. Its subcellular location is the cytoplasm. It is found in the cytosol. Its function is as follows. Involved in pilus assembly, twitching motility and adhesion to host cells. Primes type IV pili (T4P) assembly and is required for inclusion of minor pilins PilV, PilW and PilX to the surface pili. Stabilizes assembled pilus fibers likely by antagonizing retraction mediated by PilT. Calcium-binding and calcium release by PilY1 seem to be essential for twitching motility and for regulation of pilus retraction dynamics of PilT. This chain is Type IV pilus biogenesis factor PilY1, found in Pseudomonas aeruginosa (strain ATCC 15692 / DSM 22644 / CIP 104116 / JCM 14847 / LMG 12228 / 1C / PRS 101 / PAO1).